The sequence spans 419 residues: Histidine--tRNA ligase (419 aa).

The protein belongs to the class-II aminoacyl-tRNA synthetase family. Homodimer.

It is found in the cytoplasm. The enzyme catalyses tRNA(His) + L-histidine + ATP = L-histidyl-tRNA(His) + AMP + diphosphate + H(+). The sequence is that of Histidine--tRNA ligase from Desulfatibacillum aliphaticivorans.